Consider the following 103-residue polypeptide: MYAVFQSGGKQHRVSEGQTVRLEKLDIATGEAVEFAEVLMIANGEEVKIGVPFVDGGVIKAEVVAHGRGEKVKIVKFRRRKHYRKQQGHRQWFTDVKITGISA.

Belongs to the bacterial ribosomal protein bL21 family. As to quaternary structure, part of the 50S ribosomal subunit. Contacts protein L20.

This protein binds to 23S rRNA in the presence of protein L20. The polypeptide is Large ribosomal subunit protein bL21 (Enterobacter sp. (strain 638)).